The chain runs to 437 residues: MLDIQQLRSDLQNITTCLAQRGYNFPVSDFENLESQRKSIQTLTQTLQAKRNSASKQIGIAKQQGEDVSTIMAEIANMGDALKQAENQFESIQTKLQQLLMEIPNLPHNSVPTGKNADGNLEIRRWGTPKNFDFTVKDHVSIGEHLGLIDFETAAKLSGARFCLLKGGVARLHRALAQFMLDAHTQENGYNEVYVPYLVNADCLRGTGQLPKFEQDLFSVLTNAQDETDNVDKTGMVGLHLIPTAEVPLANIVRNTIVPLEQLPLKFVAHTPCFRSEAGSYGKDTRGLIRQHQFDKVELVQITHPEKSYEALESLVGHAEKILQKLELPYRIMLLCTGDMGFSAAKTYDIEVWLPAQQTYREISSCSNCEAFQARRMQARFRKGQDKPELLHTLNGSGLAVGRTLVAILENYQNEDGSVTIPEILQTYMGGIKRISL.

244 to 246 is an L-serine binding site; it reads TAE. Residue 275-277 participates in ATP binding; sequence RSE. Residue glutamate 298 participates in L-serine binding. 362 to 365 lines the ATP pocket; sequence EISS. Serine 397 contributes to the L-serine binding site.

Belongs to the class-II aminoacyl-tRNA synthetase family. Type-1 seryl-tRNA synthetase subfamily. Homodimer. The tRNA molecule binds across the dimer.

It is found in the cytoplasm. The enzyme catalyses tRNA(Ser) + L-serine + ATP = L-seryl-tRNA(Ser) + AMP + diphosphate + H(+). It carries out the reaction tRNA(Sec) + L-serine + ATP = L-seryl-tRNA(Sec) + AMP + diphosphate + H(+). It functions in the pathway aminoacyl-tRNA biosynthesis; selenocysteinyl-tRNA(Sec) biosynthesis; L-seryl-tRNA(Sec) from L-serine and tRNA(Sec): step 1/1. In terms of biological role, catalyzes the attachment of serine to tRNA(Ser). Is also able to aminoacylate tRNA(Sec) with serine, to form the misacylated tRNA L-seryl-tRNA(Sec), which will be further converted into selenocysteinyl-tRNA(Sec). This chain is Serine--tRNA ligase, found in Nitrosomonas eutropha (strain DSM 101675 / C91 / Nm57).